Reading from the N-terminus, the 527-residue chain is Triostin synthetase I (527 aa).

Residue 187-188 (GG) participates in ATP binding. A substrate-binding site is contributed by 230–231 (HQ). ATP is bound by residues 300–302 (SAP), Asp-406, Arg-421, and Lys-512. Position 512 (Lys-512) interacts with substrate.

It belongs to the ATP-dependent AMP-binding enzyme family. As to quaternary structure, monomer.

Its function is as follows. Involved in triostin biosynthesis. Activates quinoxaline-2-carboxylic acid (QA) via catalysis of the ATP-pyrophosphate exchange reaction dependent on QA, and the formation of the corresponding adenylate. Also activates structural analogs of QA such as quinoline-2-carboxylic acid and thieno[3,2-b]pyridine-5-carboxylic acid, but not quinoline-3-carboxylic acid, quinoline-4-carboxylic acid, pyridine-2-carboxylic acid or 2-pyrazinecarboxylic acid. This Streptomyces triostinicus protein is Triostin synthetase I (trsA).